The chain runs to 86 residues: Small ribosomal subunit protein uS15 (86 aa).

Residues 1 to 22 are disordered; it reads MSVDTQKVIEDNKRSAQDTGSP. Residues 7–16 are compositionally biased toward basic and acidic residues; the sequence is KVIEDNKRSA.

The protein belongs to the universal ribosomal protein uS15 family. Part of the 30S ribosomal subunit. Forms a bridge to the 50S subunit in the 70S ribosome, contacting the 23S rRNA.

Functionally, one of the primary rRNA binding proteins, it binds directly to 16S rRNA where it helps nucleate assembly of the platform of the 30S subunit by binding and bridging several RNA helices of the 16S rRNA. Its function is as follows. Forms an intersubunit bridge (bridge B4) with the 23S rRNA of the 50S subunit in the ribosome. The sequence is that of Small ribosomal subunit protein uS15 from Xanthomonas campestris pv. campestris (strain 8004).